The following is a 743-amino-acid chain: MPVAEIKNATQQPSSTNRVQAYAKLEFEKFSFFVQTLQVTMGRKASNSSDCDVHLGDTKAISRQHAKIFYSFPNQRFEISVMGKNGAFVDGEFVERGKSVPLRSGTRVQIGQISFSFLLPEGSEEDGHLKETGITPLSLQQGKIAYSDEFGGKPTGSFHTVTSNQEKDLLFSHIKHESDLPLGLSPADTNISNATSIIEHPDAANAHTLASLNQPPKHLTVSPSSIQRLSPQPYVRPTSDERPIETDSSVSAPKVANHDEELKQGKSTSPSDTVLHPDLNGSPDTGDATQKPNLSYANLIARTLIANPNKKMTLGDICEWIANNWSYYRHQPPAWHNSIRHNLSLNKAFIRIPRRQNEPGKGSFWMLDPSYIDQFEGNFFRRTKKPTPSATPAAHPDTARENELAAIQTKGISAGKTEQLNPQKETSRSKTHTSRGENVEDRPQSLLQNGIQPIIMRDGKLALNPEFFKNANGEQQAPNEQAVQAISLLQQHINKQLGPAAANNPEQATAIANALAVALAQKLQKQQTQMQGPQQVQQQAKRRKAYTSQQLNPAPTAMPHPNITSPSPSISVTQRPAVNVGPPPYVRPSAPSKLPDTRQSIGDPLPPGAMANVSAGPSSVRSSSYNSTASESKSEITSHQNLHTIPINKPFTSDRPLYSSPNDTLERVETGNQGQRMNSIGNASSFSKRDIMENENGSFDTNAKNGNNVDDSSSVRGMNLPSNSSDALRGVKRPLDETSSSYT.

An FHA domain is found at 39–94 (VTMGRKASNSSDCDVHLGDTKAISRQHAKIFYSFPNQRFEISVMGKNGAFVDGEFV). 3 disordered regions span residues 214-291 (QPPK…ATQK), 411-450 (GISAGKTEQLNPQKETSRSKTHTSRGENVEDRPQSLLQNG), and 529-743 (QMQG…SSYT). Residues 221–230 (VSPSSIQRLS) show a composition bias toward polar residues. A DNA-binding region (fork-head) is located at residues 291–385 (KPNLSYANLI…EGNFFRRTKK (95 aa)). Positions 434-443 (SRGENVEDRP) are enriched in basic and acidic residues. Low complexity predominate over residues 529–539 (QMQGPQQVQQQ). The segment covering 562–576 (NITSPSPSISVTQRP) has biased composition (polar residues). Residues 614–624 (SAGPSSVRSSS) show a composition bias toward low complexity. Polar residues-rich tracts occupy residues 625–643 (YNSTASESKSEITSHQNLH), 670–686 (TGNQGQRMNSIGNASSF), and 695–726 (ENGSFDTNAKNGNNVDDSSSVRGMNLPSNSSD).

It is found in the nucleus. Its function is as follows. Acts as a transcriptional activator for ribosomal protein genes (RPG) that contain a HomolE UAS (upstream activating sequence) in addition to a HomolD promoter element; HomolD plays the role of a TATA box in RPG promoters that do not contain a canonical TATA sequence. Binds to HomolE elements with consensus sequence 3'-ACCCTACCCT-5' (or its inverted form AGGGTAGGGT). This is Fork head transcription factor 1 from Schizosaccharomyces pombe (strain 972 / ATCC 24843) (Fission yeast).